The primary structure comprises 339 residues: ADP,ATP carrier protein (339 aa).

3 Solcar repeats span residues 39–133 (MAFV…IKGL), 145–234 (RFFV…AKGV), and 246–328 (AKWA…IKKF). 5 helical membrane-spanning segments follow: residues 41 to 70 (FVKD…LLLQ), 110 to 134 (LANV…KGLF), 144 to 164 (WRFF…SLLI), 212 to 232 (VSVQ…DTAK), and 245 to 265 (FAKW…SYPF). Positions 115 and 127 each coordinate ADP. An ADP-binding site is contributed by Arg269. The segment at 269 to 274 (RRRLMM) is important for transport activity. Positions 269–274 (RRRLMM) match the Nucleotide carrier signature motif motif. The helical transmembrane segment at 305–322 (AWSNVLRGAGGAFVLVLY) threads the bilayer.

Belongs to the mitochondrial carrier (TC 2.A.29) family. Monomer.

The protein localises to the mitochondrion inner membrane. It catalyses the reaction ADP(in) + ATP(out) = ADP(out) + ATP(in). Its activity is regulated as follows. The matrix-open state (m-state) is inhibited by the membrane-permeable bongkrekic acid (BKA). The cytoplasmic-open state (c-state) is inhibited by the membrane-impermeable toxic inhibitor carboxyatractyloside (CATR). Its function is as follows. ADP:ATP antiporter that mediates import of ADP into the mitochondrial matrix for ATP synthesis, and export of ATP out to fuel the cell. Cycles between the cytoplasmic-open state (c-state) and the matrix-open state (m-state): operates by the alternating access mechanism with a single substrate-binding site intermittently exposed to either the cytosolic (c-state) or matrix (m-state) side of the inner mitochondrial membrane. This is ADP,ATP carrier protein from Parachlorella kessleri (Green alga).